The chain runs to 291 residues: Popeye domain-containing protein 3 (291 aa).

Residue asparagine 4 is glycosylated (N-linked (GlcNAc...) asparagine). 3 consecutive transmembrane segments (helical) span residues 27-44 (GAIY…FMGG), 48-70 (FGLL…WAWV), and 77-99 (IFSW…AYQV).

The protein belongs to the popeye family. In terms of tissue distribution, expressed predominantly in skeletal muscle (at protein level). Also detected in heart.

It localises to the membrane. In terms of biological role, may play a role in the maintenance of heart function mediated, at least in part, through cAMP-binding. May play a role in the regulation of KCNK2/TREK-1-mediated current amplitude. This Homo sapiens (Human) protein is Popeye domain-containing protein 3 (POPDC3).